A 300-amino-acid chain; its full sequence is NAD kinase (300 aa).

Residue aspartate 75 is the Proton acceptor of the active site. Residues 75–76 (DG), 149–150 (ND), arginine 177, aspartate 179, 190–195 (TAYALS), alanine 214, and glutamine 248 each bind NAD(+).

It belongs to the NAD kinase family. A divalent metal cation serves as cofactor.

It localises to the cytoplasm. It carries out the reaction NAD(+) + ATP = ADP + NADP(+) + H(+). Its function is as follows. Involved in the regulation of the intracellular balance of NAD and NADP, and is a key enzyme in the biosynthesis of NADP. Catalyzes specifically the phosphorylation on 2'-hydroxyl of the adenosine moiety of NAD to yield NADP. In Burkholderia lata (strain ATCC 17760 / DSM 23089 / LMG 22485 / NCIMB 9086 / R18194 / 383), this protein is NAD kinase.